Reading from the N-terminus, the 140-residue chain is Large ribosomal subunit protein uL14 (140 aa).

This sequence belongs to the universal ribosomal protein uL14 family. Part of the 50S ribosomal subunit. Forms a cluster with proteins L3 and L24e, part of which may contact the 16S rRNA in 2 intersubunit bridges.

Functionally, binds to 23S rRNA. Forms part of two intersubunit bridges in the 70S ribosome. In Staphylothermus marinus (strain ATCC 43588 / DSM 3639 / JCM 9404 / F1), this protein is Large ribosomal subunit protein uL14.